A 341-amino-acid chain; its full sequence is MPDGFASHEERAAFIAGLPKAELHLHIEGSLEPELLFEFARRNRVAIPFASIDDVRAAYAFTNLQDFLDIYYQGMGVLHTEQDFFDLTAAYCARANADSVRHIEIFFDPQGHTARGVAFETVITGITRALDDAEARYGITSKLILCFLRHLSEAEAEATLDEALPFLGRIAGVGLDSSEVGHPPAKFERVFARARSLGLKTVAHAGEEGPPEYVREALDLLKVDRIDHGNRSLEDPALVARLAASDMTLTVCPLSNLKLCVVDDIADHPLKIMLDADLKATVNSDDPSYFGGYVNANYQAVADALDLSRDDLVTLARNSFTGSFLSDAEKARHLAAIDAYA.

Zn(2+) is bound by residues His24, His26, and His204. Glu207 acts as the Proton donor in catalysis. A Zn(2+)-binding site is contributed by Asp285. Asp286 lines the substrate pocket.

The protein belongs to the metallo-dependent hydrolases superfamily. Adenosine and AMP deaminases family. Adenine deaminase type 2 subfamily. It depends on Zn(2+) as a cofactor.

It carries out the reaction adenine + H2O + H(+) = hypoxanthine + NH4(+). Functionally, catalyzes the hydrolytic deamination of adenine to hypoxanthine. Plays an important role in the purine salvage pathway and in nitrogen catabolism. The polypeptide is Adenine deaminase (Sphingopyxis alaskensis (strain DSM 13593 / LMG 18877 / RB2256) (Sphingomonas alaskensis)).